The primary structure comprises 204 residues: Inner membrane protein BB_0250 (204 aa).

A run of 5 helical transmembrane segments spans residues 17-37 (IAYS…NVPI), 58-78 (ILIF…SFYI), 101-121 (YYYG…PFGV), 139-159 (FIVS…TLSF), and 172-192 (IKII…IIYV).

It belongs to the DedA family.

It is found in the cell inner membrane. Its function is as follows. Required for proper cell division and envelope integrity. The polypeptide is Inner membrane protein BB_0250 (Borreliella burgdorferi (strain ATCC 35210 / DSM 4680 / CIP 102532 / B31) (Borrelia burgdorferi)).